A 350-amino-acid chain; its full sequence is Small ribosomal subunit biogenesis GTPase RsgA (350 aa).

The segment covering 1 to 17 has biased composition (polar residues); it reads MSKNKLSKGQQRRVNAN. The interval 1–27 is disordered; the sequence is MSKNKLSKGQQRRVNANHQRRLKTSAE. The CP-type G domain occupies 104–273; sequence TSVLTRPDFY…VIDSPGVREF (170 aa). GTP contacts are provided by residues 160-163 and 214-222; these read NKID and GQSGVGKSS. Positions 297, 302, 304, and 310 each coordinate Zn(2+).

It belongs to the TRAFAC class YlqF/YawG GTPase family. RsgA subfamily. In terms of assembly, monomer. Associates with 30S ribosomal subunit, binds 16S rRNA. Zn(2+) serves as cofactor.

The protein resides in the cytoplasm. In terms of biological role, one of several proteins that assist in the late maturation steps of the functional core of the 30S ribosomal subunit. Helps release RbfA from mature subunits. May play a role in the assembly of ribosomal proteins into the subunit. Circularly permuted GTPase that catalyzes slow GTP hydrolysis, GTPase activity is stimulated by the 30S ribosomal subunit. The polypeptide is Small ribosomal subunit biogenesis GTPase RsgA (Salmonella agona (strain SL483)).